The sequence spans 473 residues: Putative BTB/POZ domain-containing protein R765 (473 aa).

The BTB domain occupies 2-72 (TNIQLVIKDD…KIYDREITAD (71 aa)).

Belongs to the mimivirus BTB/WD family.

The protein is Putative BTB/POZ domain-containing protein R765 of Acanthamoeba polyphaga mimivirus (APMV).